We begin with the raw amino-acid sequence, 306 residues long: Ornithine carbamoyltransferase (306 aa).

Carbamoyl phosphate contacts are provided by residues 46 to 49, glutamine 73, arginine 97, and 124 to 127; these read STRT and HPTQ. L-ornithine is bound by residues asparagine 156, aspartate 220, and 224-225; that span reads SM. Carbamoyl phosphate-binding positions include 260 to 261 and arginine 288; that span reads CL.

It belongs to the aspartate/ornithine carbamoyltransferase superfamily. OTCase family.

It localises to the cytoplasm. The enzyme catalyses carbamoyl phosphate + L-ornithine = L-citrulline + phosphate + H(+). The protein operates within amino-acid degradation; L-arginine degradation via ADI pathway; carbamoyl phosphate from L-arginine: step 2/2. Reversibly catalyzes the transfer of the carbamoyl group from carbamoyl phosphate (CP) to the N(epsilon) atom of ornithine (ORN) to produce L-citrulline. The sequence is that of Ornithine carbamoyltransferase from Campylobacter jejuni subsp. doylei (strain ATCC BAA-1458 / RM4099 / 269.97).